The following is a 259-amino-acid chain: Flap endonuclease Xni (259 aa).

Asp109 lines the Mg(2+) pocket. Residues Val165–Ala255 form the 5'-3' exonuclease domain. The K(+) site is built by Leu176, Ile187, and Ile190. The interval Gly189–Ala194 is interaction with DNA.

This sequence belongs to the Xni family. Requires Mg(2+) as cofactor. It depends on K(+) as a cofactor.

Its function is as follows. Has flap endonuclease activity. During DNA replication, flap endonucleases cleave the 5'-overhanging flap structure that is generated by displacement synthesis when DNA polymerase encounters the 5'-end of a downstream Okazaki fragment. The protein is Flap endonuclease Xni of Vibrio vulnificus (strain CMCP6).